A 245-amino-acid polypeptide reads, in one-letter code: rRNA adenine N-6-methyltransferase (245 aa).

The S-adenosyl-L-methionine site is built by N10, L12, G37, E58, D83, and S100.

Belongs to the class I-like SAM-binding methyltransferase superfamily. rRNA adenine N(6)-methyltransferase family.

It catalyses the reaction adenosine(2085) in 23S rRNA + 2 S-adenosyl-L-methionine = N(6)-dimethyladenosine(2085) in 23S rRNA + 2 S-adenosyl-L-homocysteine + 2 H(+). In terms of biological role, this protein produces a dimethylation of the adenine residue at position 2085 in 23S rRNA, resulting in reduced affinity between ribosomes and macrolide-lincosamide-streptogramin B antibiotics. This chain is rRNA adenine N-6-methyltransferase, found in Streptococcus sanguinis.